The chain runs to 354 residues: NADH-quinone oxidoreductase subunit H (354 aa).

8 helical membrane passes run 25-45 (LVRI…LILW), 91-111 (WVYL…WAVI), 126-146 (LLYA…AGWA), 170-190 (MGFA…SDIV), 205-225 (FLSW…VSGI), 257-277 (LFFL…SILF), 290-310 (FIPG…VFIW), and 330-350 (VFLP…MSPL).

The protein belongs to the complex I subunit 1 family. As to quaternary structure, NDH-1 is composed of 14 different subunits. Subunits NuoA, H, J, K, L, M, N constitute the membrane sector of the complex.

The protein localises to the cell inner membrane. It catalyses the reaction a quinone + NADH + 5 H(+)(in) = a quinol + NAD(+) + 4 H(+)(out). Functionally, NDH-1 shuttles electrons from NADH, via FMN and iron-sulfur (Fe-S) centers, to quinones in the respiratory chain. The immediate electron acceptor for the enzyme in this species is believed to be ubiquinone. Couples the redox reaction to proton translocation (for every two electrons transferred, four hydrogen ions are translocated across the cytoplasmic membrane), and thus conserves the redox energy in a proton gradient. This subunit may bind ubiquinone. The chain is NADH-quinone oxidoreductase subunit H from Paraburkholderia phymatum (strain DSM 17167 / CIP 108236 / LMG 21445 / STM815) (Burkholderia phymatum).